Reading from the N-terminus, the 329-residue chain is Malate dehydrogenase (329 aa).

G12–G18 contacts NAD(+). The substrate site is built by R95 and R101. NAD(+)-binding positions include N108, Q115, and V132–N134. The substrate site is built by N134 and R165. H190 acts as the Proton acceptor in catalysis.

It belongs to the LDH/MDH superfamily. MDH type 2 family. In terms of assembly, homodimer.

It catalyses the reaction (S)-malate + NAD(+) = oxaloacetate + NADH + H(+). With respect to regulation, substrate inhibition is observed at high concentrations of oxaloacetate. Functionally, catalyzes the reversible oxidation of malate to oxaloacetate. Catalyzes the reduction of oxaloacetate more efficiently than the oxidation of malate. This chain is Malate dehydrogenase, found in Syntrophobacter fumaroxidans (strain DSM 10017 / MPOB).